The following is a 175-amino-acid chain: Alpha-crystallin B chain (175 aa).

Met1 carries the post-translational modification N-acetylmethionine. Phosphoserine is present on residues Ser19, Ser45, and Ser59. In terms of domain architecture, sHSP spans 56-164 (RAPSWIDTGL…PERTIPITRE (109 aa)). His83 is a binding site for Zn(2+). Lys92 is subject to N6-acetyllysine. The Zn(2+) site is built by His104, Glu106, His111, and His119. The tract at residues 145–175 (VNGPRKQASGPERTIPITREEKPAVTAAPKK) is disordered. At Lys166 the chain carries N6-acetyllysine. The O-linked (GlcNAc) threonine glycan is linked to Thr170.

This sequence belongs to the small heat shock protein (HSP20) family. In terms of assembly, heteromer composed of three CRYAA and one CRYAB subunits. Aggregates with homologous proteins, including the small heat shock protein HSPB1, to form large heteromeric complexes. Inter-subunit bridging via zinc ions enhances stability, which is crucial as there is no protein turn over in the lens. Interacts with HSPBAP1 and TTN/titin. Interacts with TMEM109; in the cellular response to DNA damage. Interacts with DES; binds rapidly during early stages of DES filament assembly and a reduced binding seen in the later stages. Interacts with TMED10; the interaction mediates the translocation from the cytoplasm into the ERGIC (endoplasmic reticulum-Golgi intermediate compartment) and thereby secretion. Interacts with ATP6V1A and with MTOR, forming a ternary complex. In terms of tissue distribution, lens as well as other tissues.

The protein resides in the cytoplasm. The protein localises to the nucleus. It localises to the secreted. Its subcellular location is the lysosome. May contribute to the transparency and refractive index of the lens. Has chaperone-like activity, preventing aggregation of various proteins under a wide range of stress conditions. In lens epithelial cells, stabilizes the ATP6V1A protein, preventing its degradation by the proteasome. This Mesocricetus auratus (Golden hamster) protein is Alpha-crystallin B chain (CRYAB).